Here is a 459-residue protein sequence, read N- to C-terminus: Bifunctional protein GlmU (459 aa).

Residues 1–230 (MSNRFAVILA…FDETLGVNDR (230 aa)) are pyrophosphorylase. UDP-N-acetyl-alpha-D-glucosamine-binding positions include 9–12 (LAAG), Lys-23, Gln-73, and 78–79 (GT). Residue Asp-103 participates in Mg(2+) binding. Residues Gly-140, Glu-155, Asn-170, and Asn-228 each coordinate UDP-N-acetyl-alpha-D-glucosamine. Residue Asn-228 participates in Mg(2+) binding. A linker region spans residues 231 to 251 (VALSQAEIIMKNRINRKNMVN). The segment at 252–459 (GVTIIDPSNT…VDQLLNKKKS (208 aa)) is N-acetyltransferase. 2 residues coordinate UDP-N-acetyl-alpha-D-glucosamine: Arg-333 and Lys-351. The active-site Proton acceptor is His-363. UDP-N-acetyl-alpha-D-glucosamine is bound by residues Tyr-366 and Asn-377. Acetyl-CoA contacts are provided by residues 386 to 387 (NY), Ala-423, and Arg-440.

This sequence in the N-terminal section; belongs to the N-acetylglucosamine-1-phosphate uridyltransferase family. The protein in the C-terminal section; belongs to the transferase hexapeptide repeat family. In terms of assembly, homotrimer. It depends on Mg(2+) as a cofactor.

The protein localises to the cytoplasm. The catalysed reaction is alpha-D-glucosamine 1-phosphate + acetyl-CoA = N-acetyl-alpha-D-glucosamine 1-phosphate + CoA + H(+). The enzyme catalyses N-acetyl-alpha-D-glucosamine 1-phosphate + UTP + H(+) = UDP-N-acetyl-alpha-D-glucosamine + diphosphate. The protein operates within nucleotide-sugar biosynthesis; UDP-N-acetyl-alpha-D-glucosamine biosynthesis; N-acetyl-alpha-D-glucosamine 1-phosphate from alpha-D-glucosamine 6-phosphate (route II): step 2/2. It participates in nucleotide-sugar biosynthesis; UDP-N-acetyl-alpha-D-glucosamine biosynthesis; UDP-N-acetyl-alpha-D-glucosamine from N-acetyl-alpha-D-glucosamine 1-phosphate: step 1/1. It functions in the pathway bacterial outer membrane biogenesis; LPS lipid A biosynthesis. Catalyzes the last two sequential reactions in the de novo biosynthetic pathway for UDP-N-acetylglucosamine (UDP-GlcNAc). The C-terminal domain catalyzes the transfer of acetyl group from acetyl coenzyme A to glucosamine-1-phosphate (GlcN-1-P) to produce N-acetylglucosamine-1-phosphate (GlcNAc-1-P), which is converted into UDP-GlcNAc by the transfer of uridine 5-monophosphate (from uridine 5-triphosphate), a reaction catalyzed by the N-terminal domain. This is Bifunctional protein GlmU from Bacillus cereus (strain G9842).